A 478-amino-acid polypeptide reads, in one-letter code: Ketoisovalerate oxidoreductase subunit VorA (478 aa).

In terms of assembly, heterotrimer of the VorA, VorB and VorC subunits.

In Methanothermobacter marburgensis (strain ATCC BAA-927 / DSM 2133 / JCM 14651 / NBRC 100331 / OCM 82 / Marburg) (Methanobacterium thermoautotrophicum), this protein is Ketoisovalerate oxidoreductase subunit VorA (vorA).